The primary structure comprises 203 residues: Formate hydrogenlyase subunit 2 (203 aa).

4 4Fe-4S ferredoxin-type domains span residues 2–32 (NRFV…HGLQ), 42–72 (NEKE…TRVD), 73–102 (GAVQ…FSGS), and 137–169 (RAIA…LVDN). Residues cysteine 12, cysteine 15, cysteine 18, cysteine 22, cysteine 51, cysteine 54, cysteine 59, cysteine 63, cysteine 82, cysteine 85, cysteine 88, cysteine 92, cysteine 143, cysteine 146, cysteine 155, and cysteine 159 each coordinate [4Fe-4S] cluster.

FHL comprises of a formate dehydrogenase, unidentified electron carriers and a hydrogenase (isoenzyme 3). In this non-energy conserving pathway, molecular hydrogen and carbodioxide are released from formate. [4Fe-4S] cluster serves as cofactor.

Its function is as follows. Probable electron transfer protein for hydrogenase 3. This is Formate hydrogenlyase subunit 2 (hycB) from Escherichia coli (strain K12).